We begin with the raw amino-acid sequence, 225 residues long: CRISPR pre-crRNA endoribonuclease Cas5d (225 aa).

The protein belongs to the CRISPR-associated protein Cas5 family. Subtype I-C/Dvulg subfamily. It depends on Does not require a metal cofactor. as a cofactor.

CRISPR (clustered regularly interspaced short palindromic repeat) is an adaptive immune system that provides protection against mobile genetic elements (viruses, transposable elements and conjugative plasmids). CRISPR clusters contain spacers, sequences complementary to antecedent mobile elements, and target invading nucleic acids. CRISPR clusters are transcribed and processed into CRISPR RNA (crRNA). This protein is a sequence-specific endonuclease that cleaves pre-crRNA at G21 into mature crRNA. Does not cleave pre-crRNA associated with the T.thermophilus strain HB27 Cas5 protein (AC Q746C2) CRISPR locus. The reaction mechanism may proceed by an intramolecular attack of the 2'-hydroxyl group of G21 on the scissile phosphodiester, cutting the precursor 3' to G21 residue yielding 5'-hydroxyl and 2' and/or 3' ends lacking a hydroxyl group (perhaps a 2'/3' cyclic phosphodiester). The sequence is that of CRISPR pre-crRNA endoribonuclease Cas5d from Mannheimia succiniciproducens (strain KCTC 0769BP / MBEL55E).